Consider the following 297-residue polypeptide: MTILDKRQIQRFASDTDIETLSKAIDDDGVAIVRSVVSRDVIQRLQKEVESSDQPVWLEDNPSLKDSKFPSQARHANNLVPASKTYRDDILNNSAVHTTCKAVFRDVGDYWLTTGILRTTKPGSPAQGFHRDALLYPVLQYQPPTSPPLTVALLVSMTDATVANGATRVILGSHKWETVGTPSEDQAVRAELDAGDMLVIHQRLVHAGGEHTHQAPDTRRMLLMFLTSCQLVALESPLALSRELVETMTPLAQKMVGWRTVRPVEPNTVGLNTHRSGCLEDGLKLRAAKPLEGQDGH.

3 residues coordinate Fe cation: His-130, Asp-132, and His-206.

It belongs to the PhyH family. Homodimer. Fe cation is required as a cofactor.

It participates in secondary metabolite biosynthesis; terpenoid biosynthesis. Its function is as follows. Iron/alpha-ketoglutarate-dependent dioxygenase; part of the gene cluster that mediates the biosynthesis of calidodehydroaustin, a fungal meroterpenoid. The first step of the pathway is the synthesis of 3,5-dimethylorsellinic acid by the polyketide synthase ausA. 3,5-dimethylorsellinic acid is then prenylated by the polyprenyl transferase ausN. Further epoxidation by the FAD-dependent monooxygenase ausM and cyclization by the probable terpene cyclase ausL lead to the formation of protoaustinoid A. Protoaustinoid A is then oxidized to spiro-lactone preaustinoid A3 by the combined action of the FAD-binding monooxygenases ausB and ausC, and the dioxygenase ausE. Acid-catalyzed keto-rearrangement and ring contraction of the tetraketide portion of preaustinoid A3 by ausJ lead to the formation of preaustinoid A4. The aldo-keto reductase ausK, with the help of ausH, is involved in the next step by transforming preaustinoid A4 into isoaustinone which is in turn hydroxylated by the P450 monooxygenase ausI to form austinolide. The cytochrome P450 monooxygenase ausG modifies austinolide to austinol. Austinol is further acetylated to austin by the O-acetyltransferase ausP, which spontaneously changes to dehydroaustin. The cytochrome P450 monooxygenase ausR then converts dehydroaustin is into 7-dehydrodehydroaustin. The hydroxylation catalyzed by ausR permits the O-acetyltransferase ausQ to add an additional acetyl group to the molecule, leading to the formation of acetoxydehydroaustin. The short chain dehydrogenase ausT catalyzes the reduction of the double bond present between carbon atoms 1 and 2 to convert 7-dehydrodehydroaustin into 1,2-dihydro-7-hydroxydehydroaustin. AusQ catalyzes not only an acetylation reaction but also the addition of the PKS ausV diketide product to 1,2-dihydro-7-hydroxydehydroaustin, forming precalidodehydroaustin. Finally, the iron/alpha-ketoglutarate-dependent dioxygenase converts precalidodehydroaustin into calidodehydroaustin. This chain is Iron/alpha-ketoglutarate-dependent dioxygenase ausU, found in Aspergillus calidoustus.